A 297-amino-acid chain; its full sequence is Phosphoribosylaminoimidazole-succinocarboxamide synthase (297 aa).

The protein belongs to the SAICAR synthetase family.

The catalysed reaction is 5-amino-1-(5-phospho-D-ribosyl)imidazole-4-carboxylate + L-aspartate + ATP = (2S)-2-[5-amino-1-(5-phospho-beta-D-ribosyl)imidazole-4-carboxamido]succinate + ADP + phosphate + 2 H(+). It participates in purine metabolism; IMP biosynthesis via de novo pathway; 5-amino-1-(5-phospho-D-ribosyl)imidazole-4-carboxamide from 5-amino-1-(5-phospho-D-ribosyl)imidazole-4-carboxylate: step 1/2. This chain is Phosphoribosylaminoimidazole-succinocarboxamide synthase, found in Saccharopolyspora erythraea (strain ATCC 11635 / DSM 40517 / JCM 4748 / NBRC 13426 / NCIMB 8594 / NRRL 2338).